The chain runs to 461 residues: Fumarate hydratase class II (461 aa).

Substrate is bound by residues 97 to 99, 127 to 130, 137 to 139, and T185; these read SGT, HPND, and SSN. H186 functions as the Proton donor/acceptor in the catalytic mechanism. S316 is a catalytic residue. Substrate contacts are provided by residues S317 and 322–324; that span reads KVN.

The protein belongs to the class-II fumarase/aspartase family. Fumarase subfamily. As to quaternary structure, homotetramer.

Its subcellular location is the cytoplasm. The enzyme catalyses (S)-malate = fumarate + H2O. It participates in carbohydrate metabolism; tricarboxylic acid cycle; (S)-malate from fumarate: step 1/1. In terms of biological role, involved in the TCA cycle. Catalyzes the stereospecific interconversion of fumarate to L-malate. The polypeptide is Fumarate hydratase class II (Staphylococcus saprophyticus subsp. saprophyticus (strain ATCC 15305 / DSM 20229 / NCIMB 8711 / NCTC 7292 / S-41)).